The sequence spans 182 residues: Dual-action ribosomal maturation protein DarP (182 aa).

Belongs to the DarP family.

Its subcellular location is the cytoplasm. Member of a network of 50S ribosomal subunit biogenesis factors which assembles along the 30S-50S interface, preventing incorrect 23S rRNA structures from forming. Promotes peptidyl transferase center (PTC) maturation. This Serratia proteamaculans (strain 568) protein is Dual-action ribosomal maturation protein DarP.